The following is a 93-amino-acid chain: Small ribosomal subunit protein uS15c (93 aa).

It belongs to the universal ribosomal protein uS15 family. Part of the 30S ribosomal subunit.

It is found in the plastid. Its subcellular location is the chloroplast. The sequence is that of Small ribosomal subunit protein uS15c (rps15) from Jasminum nudiflorum (Winter jasmine).